The primary structure comprises 217 residues: MSDKKAPNVLSGRFRGYYPVVIDVETGGFNAKTDALLEIAAVTLEMDGEGWLTPGESLHFHIEPFEGANLEPAALEFTGIDPLNPLRGAVSEYEALHAIFKMVRKGIKNNHCNRAIIVAHNANFDHSFVMAATERTGLKRNPFHPFATFDTAALGGLVLGQTILAKACITAGIPFDNNQAHSALYDTDRTAELFCEMVNRWKQLGGWPLTTTAEKTG.

The Exonuclease domain occupies Val-20–Phe-194. Mg(2+) is bound by residues Asp-23, Glu-25, His-181, and Asp-186. His-181 serves as the catalytic Proton donor/acceptor.

This sequence belongs to the RNase T family. In terms of assembly, homodimer. Mg(2+) is required as a cofactor.

Functionally, trims short 3' overhangs of a variety of RNA species, leaving a one or two nucleotide 3' overhang. Responsible for the end-turnover of tRNA: specifically removes the terminal AMP residue from uncharged tRNA (tRNA-C-C-A). Also appears to be involved in tRNA biosynthesis. The protein is Ribonuclease T of Photorhabdus laumondii subsp. laumondii (strain DSM 15139 / CIP 105565 / TT01) (Photorhabdus luminescens subsp. laumondii).